An 880-amino-acid polypeptide reads, in one-letter code: Beta-glucosidase 2 (880 aa).

An N-terminal signal peptide occupies residues 1–17 (MLLILELLVLIIGLGVA). N-linked (GlcNAc...) asparagine glycans are attached at residues N24, N77, and N271. D299 is an active-site residue. 8 N-linked (GlcNAc...) asparagine glycosylation sites follow: N336, N343, N376, N548, N589, N712, N743, and N794.

Belongs to the glycosyl hydrolase 3 family.

The catalysed reaction is Hydrolysis of terminal, non-reducing beta-D-glucosyl residues with release of beta-D-glucose.. Its pathway is glycan metabolism; cellulose degradation. This chain is Beta-glucosidase 2 (BGL2), found in Saccharomycopsis fibuligera (Yeast).